A 197-amino-acid polypeptide reads, in one-letter code: Female-specific protein transformer (197 aa).

Basic and acidic residues-rich tracts occupy residues 1 to 17 (MKMD…DSRG) and 24 to 39 (RERE…DSRK). Disordered stretches follow at residues 1–136 (MKMD…PKII) and 158–197 (GYQR…RPPY). Composition is skewed to basic residues over residues 58–75 (RRLR…RSRS) and 84–127 (SRHR…RSPH). The span at 163–172 (PRPPPFPPAP) shows a compositional bias: pro residues.

It localises to the nucleus speckle. Its function is as follows. Member of the regulatory pathway controlling female somatic sexual differentiation, regulated by Sxl. Activates dsx female-specific splicing by promoting the formation of a splicing enhancer complex which consists of tra, tra2 and sr proteins. Together with tra-2, plays a role in switching fru splicing from the male-specific pattern to the female-specific pattern through activation of the female-specific fru 5'-splice site. No known function in males. The protein is Female-specific protein transformer (tra) of Drosophila melanogaster (Fruit fly).